Consider the following 240-residue polypeptide: Transcriptional regulatory protein ResD (240 aa).

One can recognise a Response regulatory domain in the interval 8-121; it reads KILVVDDEAR…EVVLRVKALL (114 aa). 4-aspartylphosphate is present on D57. A DNA-binding region (ompR/PhoB-type) is located at residues 137–237; it reads KNVLVFSHLS…VWGVGYKFEV (101 aa).

Interacts with the RNA polymerase core. Phosphorylated by ResE.

Its subcellular location is the cytoplasm. In terms of biological role, member of the two-component regulatory system ResD/ResE. Required for the expression of resA, ctaA, qcrABC and fnr; activation role in global regulation of aerobic and anaerobic respiration. This Bacillus subtilis (strain 168) protein is Transcriptional regulatory protein ResD (resD).